Here is a 353-residue protein sequence, read N- to C-terminus: Basic membrane protein C (353 aa).

A signal peptide spans 1–16 (MFKRFIFITLSLLVFA). The N-palmitoyl cysteine moiety is linked to residue C17. The S-diacylglycerol cysteine moiety is linked to residue C17.

Belongs to the BMP lipoprotein family. In terms of assembly, monomer.

The protein resides in the cell inner membrane. May be part of an ABC-type nucleoside uptake system involved in the purine salvage pathway. The chain is Basic membrane protein C (bmpC) from Borreliella burgdorferi (strain ATCC 35210 / DSM 4680 / CIP 102532 / B31) (Borrelia burgdorferi).